Reading from the N-terminus, the 334-residue chain is Nucleoid-associated protein VS_0951 (334 aa).

Belongs to the YejK family.

The protein resides in the cytoplasm. It is found in the nucleoid. The chain is Nucleoid-associated protein VS_0951 from Vibrio atlanticus (strain LGP32) (Vibrio splendidus (strain Mel32)).